A 483-amino-acid polypeptide reads, in one-letter code: Cysteine--tRNA ligase (483 aa).

Cys27 serves as a coordination point for Zn(2+). The 'HIGH' region motif lies at 29-39 (ITAYDYCHIGH). Residues Cys208, His231, and Glu235 each coordinate Zn(2+). The 'KMSKS' region signature appears at 263 to 267 (KMSKS). Lys266 lines the ATP pocket.

This sequence belongs to the class-I aminoacyl-tRNA synthetase family. Monomer. Zn(2+) is required as a cofactor.

The protein localises to the cytoplasm. The catalysed reaction is tRNA(Cys) + L-cysteine + ATP = L-cysteinyl-tRNA(Cys) + AMP + diphosphate. This Desulfovibrio desulfuricans (strain ATCC 27774 / DSM 6949 / MB) protein is Cysteine--tRNA ligase.